A 366-amino-acid polypeptide reads, in one-letter code: CRS2-associated factor 2, mitochondrial (366 aa).

Residues 1-14 (MLLPRDLLLLPWRR) constitute a mitochondrion transit peptide. The tract at residues 24–82 (RRLNHHRAPPFSDPDDDPPFTRLAERPPRAPSKKKKKEEEDQGGRIRPPEPASSDLPFD) is disordered. The span at 60 to 71 (KEEEDQGGRIRP) shows a compositional bias: basic and acidic residues. CRM domains lie at 143 to 241 (EPLA…QRPQ) and 263 to 359 (DGLT…SVSL).

As to quaternary structure, part of large ribonucleo-protein complexes that include group IIB introns.

It is found in the mitochondrion. Functionally, may be involved in the splicing of group IIB introns in mitochondria. The protein is CRS2-associated factor 2, mitochondrial of Oryza sativa subsp. japonica (Rice).